A 463-amino-acid chain; its full sequence is Chaperone SurA (463 aa).

The signal sequence occupies residues 1–25; it reads MTKPFSVVLASLLAITSTISPLASA. 2 PpiC domains span residues 174-276 and 289-388; these read GSKY…KLME and VTEY…QRVG. Disordered stretches follow at residues 329–348 and 434–463; these read ATAK…GDLG and GDRA…KPTR. A compositionally biased stretch (low complexity) spans 439–452; the sequence is NNATAAPAKSADPA. A compositionally biased stretch (pro residues) spans 453–463; the sequence is LPAPPPAKPTR.

It is found in the periplasm. It carries out the reaction [protein]-peptidylproline (omega=180) = [protein]-peptidylproline (omega=0). Functionally, chaperone involved in the correct folding and assembly of outer membrane proteins. Recognizes specific patterns of aromatic residues and the orientation of their side chains, which are found more frequently in integral outer membrane proteins. May act in both early periplasmic and late outer membrane-associated steps of protein maturation. The protein is Chaperone SurA of Xanthomonas oryzae pv. oryzae (strain MAFF 311018).